The chain runs to 605 residues: Copper resistance protein A (605 aa).

Positions 1–41 (MLLKTSRRTFLKGLTLSGVAGSLGVWSFNARSSLSLPVAAS) form a signal peptide, tat-type signal. Residues histidine 100, histidine 102, histidine 142, and histidine 144 each coordinate Cu cation. Tandem repeats lie at residues 382-389 (DHSQMGGM), 414-421 (DHSSMAGM), and 422-429 (DHSRMAGM). The 3 X 8 AA tandem repeats of D-H-X-X-M-X-G-M stretch occupies residues 382–429 (DHSQMGGMDNSGEMMSMDGADLPDSGTSSAPMDHSSMAGMDHSRMAGM). The Cu cation site is built by histidine 538, histidine 541, histidine 543, histidine 586, cysteine 587, histidine 588, histidine 592, and methionine 597.

The protein belongs to the multicopper oxidase family. CopA subfamily. Predicted to be exported by the Tat system. The position of the signal peptide cleavage has not been experimentally proven.

It localises to the periplasm. In terms of biological role, required for the copper-inducible expression of copper resistance. May have oxidase activity. This chain is Copper resistance protein A (pcoA), found in Escherichia coli.